The primary structure comprises 1104 residues: Extended synaptotagmin-1 (1104 aa).

Position 1 is an N-acetylmethionine (Met-1). The Cytoplasmic segment spans residues 1–38 (MERSPGEGPSPSPMDQPSAPSDPTDQPPAAHAKPDPGS). Residues 1 to 48 (MERSPGEGPSPSPMDQPSAPSDPTDQPPAAHAKPDPGSGGQPAGPGAA) are disordered. A compositionally biased stretch (gly residues) spans 37 to 47 (GSGGQPAGPGA). A helical membrane pass occupies residues 39-59 (GGQPAGPGAAGEALAVLTSFG). Over 60–62 (RRL) the chain is Lumenal. Residues 63 to 83 (LVLIPVYLAGAVGLSVGFVLF) traverse the membrane as a helical segment. Over 84 to 1104 (GLALYLGWRR…LMDNKDKGSS (1021 aa)) the chain is Cytoplasmic. Positions 91-116 (WRRVRDEKERSLRAARQLLDDEEQLT) form a coiled coil. An SMP-LTD domain is found at 135–313 (DVEKAEWLNK…LPNRLLVPLV (179 aa)). C2 domains follow at residues 312-433 (LVPD…DDWF), 460-580 (QVLQ…QLSS), 627-751 (SVDA…DEWL), and 777-899 (LEEV…TLSS). Phosphoserine; by CDK5 is present on Ser-324. Positions 344, 345, 357, 404, 406, 408, 410, and 411 each coordinate Ca(2+). Residues 617-641 (VDSENPQRGSSVDAPPRPCHTTPDS) form a disordered region. Position 817 is an N6-acetyllysine (Lys-817). Residues Ser-820 and Ser-941 each carry the phosphoserine modification. A disordered region spans residues 924–950 (SHSYSHSSSSLSEEPELSGGPPHITSS). Positions 925–946 (HSYSHSSSSLSEEPELSGGPPH) are enriched in low complexity. At Thr-948 the chain carries Phosphothreonine. A phosphoserine mark is found at Ser-949 and Ser-963. The region spanning 971–1093 (PLGQVKLTLW…DLSQGVARWY (123 aa)) is the C2 5 domain. Tyr-1009 is subject to Phosphotyrosine. The interval 1018–1025 (KNRGTKRR) is required for phosphatidylinositol 4,5-bisphosphate-dependent location at the cell membrane. Ser-1034 carries the phosphoserine modification.

It belongs to the extended synaptotagmin family. Interacts with ESYT2 and ESYT3. Interacts with ADGRD1; inhibiting the G-protein-coupled receptor activity of ADGRD1. Interaction with ADGRD1 is abolished when cytosolic calcium increases, relieving ADGRD1 G-protein-coupled receptor activity. Interacts (phosphorylated form) with SLC2A4. Phosphorylated on Ser residues in insulin-treated adipocytes (in vitro); this promotes interaction with SLC2A4. As to expression, widely expressed.

It is found in the endoplasmic reticulum membrane. The protein localises to the cell membrane. Its function is as follows. Binds calcium (via the C2 domains) and translocates to sites of contact between the endoplasmic reticulum and the cell membrane in response to increased cytosolic calcium levels. Helps tether the endoplasmic reticulum to the cell membrane and promotes the formation of appositions between the endoplasmic reticulum and the cell membrane. Acts as an inhibitor of ADGRD1 G-protein-coupled receptor activity in absence of cytosolic calcium. Binds glycerophospholipids in a barrel-like domain and may play a role in cellular lipid transport. In Homo sapiens (Human), this protein is Extended synaptotagmin-1.